A 448-amino-acid chain; its full sequence is Trk system potassium uptake protein TrkA homolog 1 (448 aa).

The RCK N-terminal 1 domain occupies 1–124 (MKAVIIGAGE…RAQVGVDLMI (124 aa)). Residues 7-11 (GAGEV), aspartate 29, 70-71 (TG), and arginine 101 each bind NAD(+). An RCK C-terminal 1 domain is found at 144–225 (IDAEMFAEGK…MEDLESVFGS (82 aa)). Residues 230-348 (RTRILLIGCG…FEMVGIDMAV (119 aa)) form the RCK N-terminal 2 domain. NAD(+) is bound at residue 232-262 (RILLIGCGIVGMYLAKLIDKEENADLRIIEH). One can recognise an RCK C-terminal 2 domain in the interval 368-448 (QTLTTIEGER…AASEVEKYFK (81 aa)).

Functionally, part of a potassium transport system. This chain is Trk system potassium uptake protein TrkA homolog 1 (trkA1), found in Methanosarcina mazei (strain ATCC BAA-159 / DSM 3647 / Goe1 / Go1 / JCM 11833 / OCM 88) (Methanosarcina frisia).